The chain runs to 67 residues: Sperm protamine P1 (67 aa).

The tract at residues 1-67 is disordered; it reads MASYRNSRSR…RRRKRNNENK (67 aa). Composition is skewed to basic residues over residues 7 to 25 and 34 to 67; these read SRSR…RSRV and RSSR…NENK.

It belongs to the protamine P1 family. Testis.

It is found in the nucleus. The protein resides in the chromosome. Functionally, protamines substitute for histones in the chromatin of sperm during the haploid phase of spermatogenesis. They compact sperm DNA into a highly condensed, stable and inactive complex. In Isoodon macrourus (Short-nosed bandicoot), this protein is Sperm protamine P1 (PRM1).